Here is a 241-residue protein sequence, read N- to C-terminus: Sugar fermentation stimulation protein homolog (241 aa).

It belongs to the SfsA family.

This chain is Sugar fermentation stimulation protein homolog, found in Yersinia enterocolitica serotype O:8 / biotype 1B (strain NCTC 13174 / 8081).